Reading from the N-terminus, the 243-residue chain is Aldehyde decarbonylase (243 aa).

Fe cation-binding residues include Glu45, Glu73, His76, Glu128, and His160.

This sequence belongs to the aldehyde decarbonylase family. Binds 2 metal cations per subunit. The catalytic dinuclear metal-binding site could be either a di-iron or a manganese-iron cofactor. serves as cofactor.

The enzyme catalyses a long-chain fatty aldehyde + 2 NADPH + O2 + H(+) = a long-chain alkane + formate + 2 NADP(+) + H2O. Catalyzes the decarbonylation of fatty aldehydes to alkanes. Requires the presence of ferredoxin, ferredoxin reductase and NADPH for in vitro decarbonylase activity. Involved in the biosynthesis of alkanes, mainly heptadecane and pentadecane. The polypeptide is Aldehyde decarbonylase (Prochlorococcus marinus (strain MIT 9313)).